Here is a 359-residue protein sequence, read N- to C-terminus: Aspartate carbamoyltransferase catalytic subunit (359 aa).

Carbamoyl phosphate-binding residues include arginine 52 and threonine 53. Lysine 81 is a binding site for L-aspartate. Carbamoyl phosphate is bound by residues arginine 102, histidine 130, and glutamine 133. L-aspartate is bound by residues arginine 163 and arginine 224. Carbamoyl phosphate contacts are provided by leucine 264 and proline 265.

This sequence belongs to the aspartate/ornithine carbamoyltransferase superfamily. ATCase family. In terms of assembly, heterododecamer (2C3:3R2) of six catalytic PyrB chains organized as two trimers (C3), and six regulatory PyrI chains organized as three dimers (R2).

The catalysed reaction is carbamoyl phosphate + L-aspartate = N-carbamoyl-L-aspartate + phosphate + H(+). It participates in pyrimidine metabolism; UMP biosynthesis via de novo pathway; (S)-dihydroorotate from bicarbonate: step 2/3. Catalyzes the condensation of carbamoyl phosphate and aspartate to form carbamoyl aspartate and inorganic phosphate, the committed step in the de novo pyrimidine nucleotide biosynthesis pathway. This Brachyspira hyodysenteriae (strain ATCC 49526 / WA1) protein is Aspartate carbamoyltransferase catalytic subunit.